A 187-amino-acid polypeptide reads, in one-letter code: MADEQNLDAQAQDQAAEAGAGEELTTRVQVLEEQLAAAQDQSLRVAADLQNVRRRAEQDVEKAHKFALEKFAGDLLPIIDSLERGLDLSNPDDESIRPMREGIELTLKMFQDTLKRYQLEAIDPYGQPFSADQHQAMAMQESADVEPNTVLKVFQKGYQLNGRLLRPAMVVVSKAPSPATPSINEQA.

Positions 1–23 (MADEQNLDAQAQDQAAEAGAGEE) are disordered. Positions 7-23 (LDAQAQDQAAEAGAGEE) are enriched in low complexity.

This sequence belongs to the GrpE family. As to quaternary structure, homodimer.

Its subcellular location is the cytoplasm. Its function is as follows. Participates actively in the response to hyperosmotic and heat shock by preventing the aggregation of stress-denatured proteins, in association with DnaK and GrpE. It is the nucleotide exchange factor for DnaK and may function as a thermosensor. Unfolded proteins bind initially to DnaJ; upon interaction with the DnaJ-bound protein, DnaK hydrolyzes its bound ATP, resulting in the formation of a stable complex. GrpE releases ADP from DnaK; ATP binding to DnaK triggers the release of the substrate protein, thus completing the reaction cycle. Several rounds of ATP-dependent interactions between DnaJ, DnaK and GrpE are required for fully efficient folding. This chain is Protein GrpE, found in Pseudomonas savastanoi pv. phaseolicola (strain 1448A / Race 6) (Pseudomonas syringae pv. phaseolicola (strain 1448A / Race 6)).